Consider the following 203-residue polypeptide: ATP-dependent Clp protease proteolytic subunit 1 (203 aa).

The active-site Nucleophile is the Ser-101. Residue His-126 is part of the active site.

The protein belongs to the peptidase S14 family. As to quaternary structure, fourteen ClpP subunits assemble into 2 heptameric rings which stack back to back to give a disk-like structure with a central cavity, resembling the structure of eukaryotic proteasomes.

It is found in the cytoplasm. The catalysed reaction is Hydrolysis of proteins to small peptides in the presence of ATP and magnesium. alpha-casein is the usual test substrate. In the absence of ATP, only oligopeptides shorter than five residues are hydrolyzed (such as succinyl-Leu-Tyr-|-NHMec, and Leu-Tyr-Leu-|-Tyr-Trp, in which cleavage of the -Tyr-|-Leu- and -Tyr-|-Trp bonds also occurs).. Cleaves peptides in various proteins in a process that requires ATP hydrolysis. Has a chymotrypsin-like activity. Plays a major role in the degradation of misfolded proteins. The sequence is that of ATP-dependent Clp protease proteolytic subunit 1 from Synechococcus sp. (strain JA-3-3Ab) (Cyanobacteria bacterium Yellowstone A-Prime).